The following is a 194-amino-acid chain: ATP-dependent Clp protease proteolytic subunit (194 aa).

The active-site Nucleophile is S98. The active site involves H123.

It belongs to the peptidase S14 family. Fourteen ClpP subunits assemble into 2 heptameric rings which stack back to back to give a disk-like structure with a central cavity, resembling the structure of eukaryotic proteasomes.

The protein localises to the cytoplasm. The catalysed reaction is Hydrolysis of proteins to small peptides in the presence of ATP and magnesium. alpha-casein is the usual test substrate. In the absence of ATP, only oligopeptides shorter than five residues are hydrolyzed (such as succinyl-Leu-Tyr-|-NHMec, and Leu-Tyr-Leu-|-Tyr-Trp, in which cleavage of the -Tyr-|-Leu- and -Tyr-|-Trp bonds also occurs).. Its function is as follows. Cleaves peptides in various proteins in a process that requires ATP hydrolysis. Has a chymotrypsin-like activity. Plays a major role in the degradation of misfolded proteins. This chain is ATP-dependent Clp protease proteolytic subunit, found in Syntrophotalea carbinolica (strain DSM 2380 / NBRC 103641 / GraBd1) (Pelobacter carbinolicus).